The following is a 293-amino-acid chain: LysM and putative peptidoglycan-binding domain-containing protein 4 (293 aa).

Residues 1-214 (MRQKEVLAKS…VADGADCGIQ (214 aa)) are Extracellular-facing. A disordered region spans residues 28 to 65 (FNNGSGDSGDSSEEESHQVVLRPRGKEHQKNSSQRPGA). Asn-30 is a glycosylation site (N-linked (GlcNAc...) asparagine). The LysM domain occupies 71 to 115 (LQRELAQEDSLNKLALQYGCKVADIKKANNFIREQDLYALKSIKI). A helical membrane pass occupies residues 215 to 235 (WWNAVFLMLLIGIVLPVFYLV). The Cytoplasmic portion of the chain corresponds to 236-293 (YFKIQATGEPSNGLNATVVPNGSMTLSPVPGQAPRLAIPVPTLPASDSQVSPTTQAGA).

It is found in the membrane. This chain is LysM and putative peptidoglycan-binding domain-containing protein 4 (Lysmd4), found in Mus musculus (Mouse).